The following is an 89-amino-acid chain: Small ribosomal subunit protein uS14 (89 aa).

Zn(2+) is bound by residues Cys-52, Cys-55, Cys-68, and Cys-71.

It belongs to the universal ribosomal protein uS14 family. As to quaternary structure, part of the 30S ribosomal subunit. Contacts proteins S3 and S10. The cofactor is Zn(2+).

Binds 16S rRNA, required for the assembly of 30S particles and may also be responsible for determining the conformation of the 16S rRNA at the A site. The chain is Small ribosomal subunit protein uS14 (rpsN) from Salinibacter ruber (strain DSM 13855 / M31).